The primary structure comprises 512 residues: Maturase K (512 aa).

This sequence belongs to the intron maturase 2 family. MatK subfamily.

The protein resides in the plastid. Its subcellular location is the chloroplast. Functionally, usually encoded in the trnK tRNA gene intron. Probably assists in splicing its own and other chloroplast group II introns. In Dalea wrightii (Wright's prairie clover), this protein is Maturase K.